Consider the following 343-residue polypeptide: L-threonine 3-dehydrogenase (343 aa).

Cys-38 is a Zn(2+) binding site. Residues Thr-40 and His-43 each act as charge relay system in the active site. Zn(2+)-binding residues include His-63, Glu-64, Cys-93, Cys-96, Cys-99, and Cys-107. NAD(+) is bound by residues Ile-176, Asp-196, Arg-201, 261–263, and 286–288; these read LGI and IAG.

The protein belongs to the zinc-containing alcohol dehydrogenase family. In terms of assembly, homotetramer. It depends on Zn(2+) as a cofactor.

Its subcellular location is the cytoplasm. The enzyme catalyses L-threonine + NAD(+) = (2S)-2-amino-3-oxobutanoate + NADH + H(+). It participates in amino-acid degradation; L-threonine degradation via oxydo-reductase pathway; glycine from L-threonine: step 1/2. Its function is as follows. Catalyzes the NAD(+)-dependent oxidation of L-threonine to 2-amino-3-ketobutyrate. The sequence is that of L-threonine 3-dehydrogenase from Thermus thermophilus (strain ATCC 27634 / DSM 579 / HB8).